The sequence spans 228 residues: Large ribosomal subunit protein uL3 (228 aa).

The segment at 135 to 159 (MKSQRASHGNSRSHNVPGSIGMAQD) is disordered. A compositionally biased stretch (polar residues) spans 140-150 (ASHGNSRSHNV). At Gln158 the chain carries N5-methylglutamine.

Belongs to the universal ribosomal protein uL3 family. As to quaternary structure, part of the 50S ribosomal subunit. Forms a cluster with proteins L14 and L19. Post-translationally, methylated by PrmB.

Its function is as follows. One of the primary rRNA binding proteins, it binds directly near the 3'-end of the 23S rRNA, where it nucleates assembly of the 50S subunit. This chain is Large ribosomal subunit protein uL3, found in Albidiferax ferrireducens (strain ATCC BAA-621 / DSM 15236 / T118) (Rhodoferax ferrireducens).